Reading from the N-terminus, the 861-residue chain is Glucans biosynthesis glucosyltransferase H (861 aa).

Disordered stretches follow at residues 65–89 (RLSA…SVGR) and 101–129 (AGEP…SMVP). 2 stretches are compositionally biased toward basic and acidic residues: residues 67–76 (SAREPAKGET) and 105–114 (LLKRRPDGTV). 6 consecutive transmembrane segments (helical) span residues 181–201 (FLLG…TKVL), 208–228 (LLEI…SAGF), 532–552 (VFLT…FLLL), 589–609 (LFSA…LLLV), 616–636 (GGLP…ALLA), and 698–718 (FVLW…LSVM).

The protein belongs to the glycosyltransferase 2 family. OpgH subfamily.

The protein resides in the cell inner membrane. It functions in the pathway glycan metabolism; osmoregulated periplasmic glucan (OPG) biosynthesis. Involved in the biosynthesis of osmoregulated periplasmic glucans (OPGs). The chain is Glucans biosynthesis glucosyltransferase H from Cupriavidus pinatubonensis (strain JMP 134 / LMG 1197) (Cupriavidus necator (strain JMP 134)).